Consider the following 332-residue polypeptide: Protein FAM131B (332 aa).

A disordered region spans residues 1–22 (MDSTSSLHGSSLHRPSTEQTRT). S47 carries the phosphoserine modification. Positions 95-114 (PTIQPQHSHEAVRRDTDAYS) are disordered. The span at 101-111 (HSHEAVRRDTD) shows a compositional bias: basic and acidic residues. A phosphoserine mark is found at S114 and S117. The segment at 221 to 332 (LGPAFDDSQP…FDEEEGDANN (112 aa)) is disordered. Composition is skewed to basic and acidic residues over residues 272 to 281 (PVEEEKRPLA) and 288 to 302 (AGCRDLESLSPREDP). S295, S297, and S313 each carry phosphoserine. T316 carries the post-translational modification Phosphothreonine. S317, S318, and S322 each carry phosphoserine. Residues 323-332 (FDEEEGDANN) show a composition bias toward acidic residues.

It belongs to the FAM131 family.

The sequence is that of Protein FAM131B (Fam131b) from Mus musculus (Mouse).